A 198-amino-acid chain; its full sequence is MFKQSVFIKSAANKSGWIEDNIPEVCFVGRSNVGKSSFINTLANNKKLAKVANTPGKTRLLNFFDINNSSFRLVDAPGYGYAKISNSMKVEFGIMMEDYLTTRENLKLVCMLVDLRHKPTNDDVQMYDFLKANDIPVLMIGTKLDKLKRNEIAKNEKLIKETLEFDQNDVFVKVSNLDKINIKESYDALIRLLEVENG.

The EngB-type G domain maps to 21–195; it reads NIPEVCFVGR…YDALIRLLEV (175 aa). GTP contacts are provided by residues 29–36, 56–60, 75–78, 142–145, and 174–176; these read GRSNVGKS, GKTRL, DAPG, TKLD, and VSN. Mg(2+) is bound by residues S36 and T58.

The protein belongs to the TRAFAC class TrmE-Era-EngA-EngB-Septin-like GTPase superfamily. EngB GTPase family. Requires Mg(2+) as cofactor.

In terms of biological role, necessary for normal cell division and for the maintenance of normal septation. This Mesoplasma florum (strain ATCC 33453 / NBRC 100688 / NCTC 11704 / L1) (Acholeplasma florum) protein is Probable GTP-binding protein EngB.